The following is a 129-amino-acid chain: Dynein 14 kDa light chain, flagellar outer arm (129 aa).

Residues 2 to 109 (AFITEIANEA…LNRIVTELSG (108 aa)) form the Thioredoxin domain. Cys-34 and Cys-37 form a disulfide bridge. The segment at 107-129 (LSGKNPPPAAPAAAPAAPAAEAS) is disordered. Low complexity predominate over residues 117 to 129 (PAAAPAAPAAEAS).

As to quaternary structure, consists of at least 3 heavy chains (alpha, beta and gamma), 2 intermediate chains and 8 light chains.

It localises to the cell projection. It is found in the cilium. Its subcellular location is the flagellum. The protein resides in the cytoplasm. The protein localises to the cytoskeleton. It localises to the flagellum axoneme. In terms of biological role, may be involved in regulating the redox state of functionally important thiol groups within dynein. The chain is Dynein 14 kDa light chain, flagellar outer arm from Chlamydomonas reinhardtii (Chlamydomonas smithii).